The sequence spans 722 residues: Probable dipeptidyl-peptidase 5 (722 aa).

A signal peptide spans 1–18 (MGALRWLSLAAAASSALA). Residues Asn-75, Asn-78, Asn-86, Asn-94, Asn-151, Asn-253, and Asn-448 are each glycosylated (N-linked (GlcNAc...) asparagine). The active-site Charge relay system is Ser-558. An N-linked (GlcNAc...) asparagine glycan is attached at Asn-605. Catalysis depends on charge relay system residues Asp-641 and His-673.

It belongs to the peptidase S9C family.

Its subcellular location is the secreted. Its function is as follows. Extracellular dipeptidyl-peptidase which removes N-terminal dipeptides sequentially from polypeptides having unsubstituted N-termini. The polypeptide is Probable dipeptidyl-peptidase 5 (dpp5) (Emericella nidulans (strain FGSC A4 / ATCC 38163 / CBS 112.46 / NRRL 194 / M139) (Aspergillus nidulans)).